The sequence spans 212 residues: Guanylate kinase (212 aa).

One can recognise a Guanylate kinase-like domain in the interval 7–187; sequence GLLIVLSGPS…AADRIIAIIR (181 aa). 14–21 is a binding site for ATP; the sequence is GPSGVGKA.

It belongs to the guanylate kinase family.

It is found in the cytoplasm. It catalyses the reaction GMP + ATP = GDP + ADP. In terms of biological role, essential for recycling GMP and indirectly, cGMP. This Onion yellows phytoplasma (strain OY-M) protein is Guanylate kinase.